A 114-amino-acid polypeptide reads, in one-letter code: Ribonuclease P protein component (114 aa).

This sequence belongs to the RnpA family. In terms of assembly, consists of a catalytic RNA component (M1 or rnpB) and a protein subunit.

The catalysed reaction is Endonucleolytic cleavage of RNA, removing 5'-extranucleotides from tRNA precursor.. In terms of biological role, RNaseP catalyzes the removal of the 5'-leader sequence from pre-tRNA to produce the mature 5'-terminus. It can also cleave other RNA substrates such as 4.5S RNA. The protein component plays an auxiliary but essential role in vivo by binding to the 5'-leader sequence and broadening the substrate specificity of the ribozyme. This chain is Ribonuclease P protein component, found in Clostridioides difficile (strain 630) (Peptoclostridium difficile).